A 981-amino-acid polypeptide reads, in one-letter code: MVIYPWLKNTTELTIALPKKPIIHANMDVLGSPRGGTPTGEHEINAQDGSPINFSPSPDFCWLCDELFIKLEEVALKKKDLGKPRKVRNLEITSNFVSLWRKTVGNDIYPALVLSLPYNDRRSYRVKDVTLVKALCKHMKLPRNSETERRLLHWKQNAPRGVKLSTFCVEELQKRRREPVVPKRMSIDEVNGMLDKLEHESNVGKWSYISLAESPAFNYCLEHMSYVELRFFFDIVLKVPIVSGLESLLLSCWHPDAESYFKVVSDLRIVAHTLYDPNERLEKNDLSVRIGYAFAPHMAQRVKIPYEKVSTKLGNDFYVEEKMDGDRIQVHYMDYGNSIAYFSRNGINYTYLYGENSSKGSISNHLKFVEGVKECILDGEMVSYDKEMQCILPFGLTKSGASHQVNFETTGHTEPTYRPLYAVFDLLYLNGQLLTNQDVVKRKEYLEKILIPSKNVVHLLSGPRCSDAEAITAALGAAVAHGSEGIVLKKARSKYSVGKRDDSWIKIKPEYLENFGENMDLVVIGRDKGRKDSFICALAVTDDSEKNNPSSYESGSDSDSDSEPIIVQPKIEKFISFCSIANGISNEEFKEIDRLTRGNWFPYDERKPPTDWVEFGTKTPREWIDPKNSVVLEVKARSIDNEESKSDLYKTGSTLYNAYCKRIRHDKNWSTASTVAEYDTAREARSYFNVSQNAKFGKDRSSPRKRRTFHLVGDIDVTKPSKADFLKGYYFYVTSGYFDLQSKKNIDASEIGEAVVSCGGTYIHNLRIRASLDKLYILGCKDTRELKMLIERGYDIIHPEWLMDCVKYGTMLQIEPKYVYSASEELMKQARNQEDKYGESYQLPVTEDTLKALANKQVEEGYASEMGTDAVSEYERLLIFKGWLFYILDDYAYHSSWSDIVKWNIESCGGEVTNDLELATIVVAVKDCFSQLSLQAVRNNIGARITGSNDVQPIPKIVTSEWVEACMEAQYLVDEDEYAAI.

ATP-binding residues include Glu320, Lys322, Arg327, Glu380, Phe424, Glu484, Lys489, Lys506, and Lys508. Lys322 serves as the catalytic N6-AMP-lysine intermediate. Glu380 is a binding site for Mg(2+). Glu484 serves as a coordination point for Mg(2+). Residues 544–563 (SEKNNPSSYESGSDSDSDSE) form a disordered region. 2 BRCT domains span residues 721-819 (SKAD…PKYV) and 875-980 (ERLL…EYAA).

This sequence belongs to the ATP-dependent DNA ligase family. Mg(2+) serves as cofactor.

It is found in the nucleus. The enzyme catalyses ATP + (deoxyribonucleotide)n-3'-hydroxyl + 5'-phospho-(deoxyribonucleotide)m = (deoxyribonucleotide)n+m + AMP + diphosphate.. Functionally, DNA ligase involved in DNA non-homologous end joining (NHEJ); required for double-strand break (DSB) repair. The chain is DNA ligase 4 (LIG4) from Eremothecium gossypii (strain ATCC 10895 / CBS 109.51 / FGSC 9923 / NRRL Y-1056) (Yeast).